Here is a 107-residue protein sequence, read N- to C-terminus: Cytochrome c2 (107 aa).

Position 1 is a pyrrolidone carboxylic acid (glutamine 1). Residues cysteine 13, cysteine 16, histidine 17, and methionine 79 each coordinate heme c.

It belongs to the cytochrome c family. In terms of processing, binds 1 heme c group covalently per subunit.

Its subcellular location is the periplasm. Functionally, cytochrome c2 is found mainly in purple, non-sulfur, photosynthetic bacteria where it functions as the electron donor to the oxidized bacteriochlorophyll in the photophosphorylation pathway. However, it may also have a role in the respiratory chain and is found in some non-photosynthetic bacteria. The chain is Cytochrome c2 from Rhodoplanes tepidamans (Rhodoplanes cryptolactis).